The chain runs to 453 residues: MTLDVVILAAGQGTRMRSAKPKVLHALAGKPLVSHVLDTAEQLGATRTHVVIGHGAEQVETELDGRDVRFALQAEQKGTGHAVAQTLDELGDGKVLILYGDVPLIRAETLTALLDEVDERRLGLLTVTLDDPGGYGRIVRDAEGRVTRIVEHKDASEAERGITECNTGIVAATGTQLKRWLPQLSAENAQGEYYLTDIFAMAAAEGIEVATASPASALEVEGVNNRSQMAALERAYQRDRAERLLTEGVALADPARFDVRGRLQCGHDVFIDVGCVFEGDVTLGDGVSVGPYTLIRDSHVAAGTVIEAHSIIEGAEVAEQAHIGPFARLRPGTRLARQSKVGNFVETKNAEVGEGSKINHLSYVGDASLGGGVNIGAGTITCNYDGANKHRTEIGDDVFVGSNTALVAPVALGAGATIGAGSTISRDVEAGALAVARTRQTTRAGWKRPRKSS.

A pyrophosphorylase region spans residues 1-226 (MTLDVVILAA…ALEVEGVNNR (226 aa)). Residues 8 to 11 (LAAG), Lys22, Gln73, 78 to 79 (GT), 99 to 101 (YGD), Gly136, Glu151, Asn166, and Asn224 each bind UDP-N-acetyl-alpha-D-glucosamine. Mg(2+) is bound at residue Asp101. Mg(2+) is bound at residue Asn224. Positions 227–247 (SQMAALERAYQRDRAERLLTE) are linker. Residues 248–453 (GVALADPARF…AGWKRPRKSS (206 aa)) form an N-acetyltransferase region. UDP-N-acetyl-alpha-D-glucosamine-binding residues include Arg330 and Lys348. The Proton acceptor role is filled by His360. UDP-N-acetyl-alpha-D-glucosamine-binding residues include Tyr363 and Asn374. Acetyl-CoA contacts are provided by residues Ala377, 383 to 384 (NY), Ser402, Ala420, and Arg437.

In the N-terminal section; belongs to the N-acetylglucosamine-1-phosphate uridyltransferase family. The protein in the C-terminal section; belongs to the transferase hexapeptide repeat family. In terms of assembly, homotrimer. Mg(2+) serves as cofactor.

Its subcellular location is the cytoplasm. It carries out the reaction alpha-D-glucosamine 1-phosphate + acetyl-CoA = N-acetyl-alpha-D-glucosamine 1-phosphate + CoA + H(+). It catalyses the reaction N-acetyl-alpha-D-glucosamine 1-phosphate + UTP + H(+) = UDP-N-acetyl-alpha-D-glucosamine + diphosphate. It participates in nucleotide-sugar biosynthesis; UDP-N-acetyl-alpha-D-glucosamine biosynthesis; N-acetyl-alpha-D-glucosamine 1-phosphate from alpha-D-glucosamine 6-phosphate (route II): step 2/2. It functions in the pathway nucleotide-sugar biosynthesis; UDP-N-acetyl-alpha-D-glucosamine biosynthesis; UDP-N-acetyl-alpha-D-glucosamine from N-acetyl-alpha-D-glucosamine 1-phosphate: step 1/1. Its pathway is bacterial outer membrane biogenesis; LPS lipid A biosynthesis. In terms of biological role, catalyzes the last two sequential reactions in the de novo biosynthetic pathway for UDP-N-acetylglucosamine (UDP-GlcNAc). The C-terminal domain catalyzes the transfer of acetyl group from acetyl coenzyme A to glucosamine-1-phosphate (GlcN-1-P) to produce N-acetylglucosamine-1-phosphate (GlcNAc-1-P), which is converted into UDP-GlcNAc by the transfer of uridine 5-monophosphate (from uridine 5-triphosphate), a reaction catalyzed by the N-terminal domain. The sequence is that of Bifunctional protein GlmU from Chromohalobacter salexigens (strain ATCC BAA-138 / DSM 3043 / CIP 106854 / NCIMB 13768 / 1H11).